The primary structure comprises 421 residues: NADH-quinone oxidoreductase subunit F (421 aa).

54-63 (GRGGAGFSTG) contacts NAD(+). Position 166-213 (166-213 (GAGAYICGEETALLESLEGKKGMPRLKPPFPAGFGLYGCPTTINNVES)) interacts with FMN. Residues C344, C347, C350, and C390 each contribute to the [4Fe-4S] cluster site.

The protein belongs to the complex I 51 kDa subunit family. FMN is required as a cofactor. The cofactor is [4Fe-4S] cluster.

The enzyme catalyses a quinone + NADH + 5 H(+)(in) = a quinol + NAD(+) + 4 H(+)(out). In terms of biological role, NDH-1 shuttles electrons from NADH, via FMN and iron-sulfur (Fe-S) centers, to quinones in the respiratory chain. Couples the redox reaction to proton translocation (for every two electrons transferred, four hydrogen ions are translocated across the cytoplasmic membrane), and thus conserves the redox energy in a proton gradient. In Rickettsia conorii (strain ATCC VR-613 / Malish 7), this protein is NADH-quinone oxidoreductase subunit F (nuoF).